The chain runs to 356 residues: UDP-N-acetylglucosamine--N-acetylmuramyl-(pentapeptide) pyrophosphoryl-undecaprenol N-acetylglucosamine transferase (356 aa).

UDP-N-acetyl-alpha-D-glucosamine is bound by residues 15 to 17, asparagine 127, arginine 163, serine 191, isoleucine 244, 263 to 268, and glutamine 288; these read TGG and ALTVSE.

The protein belongs to the glycosyltransferase 28 family. MurG subfamily.

The protein resides in the cell inner membrane. The catalysed reaction is di-trans,octa-cis-undecaprenyl diphospho-N-acetyl-alpha-D-muramoyl-L-alanyl-D-glutamyl-meso-2,6-diaminopimeloyl-D-alanyl-D-alanine + UDP-N-acetyl-alpha-D-glucosamine = di-trans,octa-cis-undecaprenyl diphospho-[N-acetyl-alpha-D-glucosaminyl-(1-&gt;4)]-N-acetyl-alpha-D-muramoyl-L-alanyl-D-glutamyl-meso-2,6-diaminopimeloyl-D-alanyl-D-alanine + UDP + H(+). It participates in cell wall biogenesis; peptidoglycan biosynthesis. Cell wall formation. Catalyzes the transfer of a GlcNAc subunit on undecaprenyl-pyrophosphoryl-MurNAc-pentapeptide (lipid intermediate I) to form undecaprenyl-pyrophosphoryl-MurNAc-(pentapeptide)GlcNAc (lipid intermediate II). This is UDP-N-acetylglucosamine--N-acetylmuramyl-(pentapeptide) pyrophosphoryl-undecaprenol N-acetylglucosamine transferase from Yersinia pestis bv. Antiqua (strain Antiqua).